The chain runs to 1372 residues: DNA-directed RNA polymerase subunit beta (1372 aa).

It belongs to the RNA polymerase beta chain family. As to quaternary structure, the RNAP catalytic core consists of 2 alpha, 1 beta, 1 beta' and 1 omega subunit. When a sigma factor is associated with the core the holoenzyme is formed, which can initiate transcription.

The enzyme catalyses RNA(n) + a ribonucleoside 5'-triphosphate = RNA(n+1) + diphosphate. Functionally, DNA-dependent RNA polymerase catalyzes the transcription of DNA into RNA using the four ribonucleoside triphosphates as substrates. This is DNA-directed RNA polymerase subunit beta from Bradyrhizobium sp. (strain ORS 278).